Reading from the N-terminus, the 134-residue chain is Small ribosomal subunit protein uS11 (134 aa).

Residues 1-22 form a disordered region; that stretch reads MAQKTRATAARKPRRKVNKNVT. A compositionally biased stretch (basic residues) spans 9–18; it reads AARKPRRKVN.

It belongs to the universal ribosomal protein uS11 family. Part of the 30S ribosomal subunit. Interacts with proteins S7 and S18. Binds to IF-3.

In terms of biological role, located on the platform of the 30S subunit, it bridges several disparate RNA helices of the 16S rRNA. Forms part of the Shine-Dalgarno cleft in the 70S ribosome. In Kocuria rhizophila (strain ATCC 9341 / DSM 348 / NBRC 103217 / DC2201), this protein is Small ribosomal subunit protein uS11.